Reading from the N-terminus, the 688-residue chain is MTTQNFLVEIGTEELPPKALKTLATSFADNVEAELNQAGLTFDKIEWFAAPRRLAVKVLNLAKQQPSKEIEKRGPAVSAAFDAEGKPTKAAEGWARGCGITVEQAERIATDKGEWLVHRAKIEGQPTKNLLNDIVANALAKLPIPKPMRWADKTVQFIRPVHTVTMLLGDELIEGEILGVASARTIRGHRFLGEKEFDIQHADQYPQLLRDKGSVVADFNERKAEILAKSQAKATALGGVADIEESLLEEVTSLVEYPNVLAAKFEERFLAVPAEALVYTMKGDQKYFPIYDKDGRLLPHFIFVSNINPEDPTAIIEGNEKVVRPRLTDAEFFFKTDLKQKLVDRLPRLETVLFQQQLGTLKDKTDRIEQLAGEIAKQIGTDEAKAKRAGLLSKCDLMTNMVFEFTDTQGVMGMHYARHDGEDEEVAVALNEQYMPRFAGDELPKSLVASAVALADKFDTLTGIFGIGQAPKGSADPFALRRAALGALRIIVEKNLPLDLEDLVKKSAALFGDKLTNQNVVADVVDFMLGRFRAWYQDEGIEVDVIQAVLARRPTRPADFDARVRAVSHFRTLDSAEALAAANKRVSNILAKADAAIGEINLTVCVEQAEKALAEAVLALRTEVQPLIAQGDYTTVLDKLANLRAPVDSFFDNVMVNAEDPALRQNRLAILNTLQGLFLQVADISVLQ.

The protein belongs to the class-II aminoacyl-tRNA synthetase family. As to quaternary structure, tetramer of two alpha and two beta subunits.

It is found in the cytoplasm. The enzyme catalyses tRNA(Gly) + glycine + ATP = glycyl-tRNA(Gly) + AMP + diphosphate. This chain is Glycine--tRNA ligase beta subunit, found in Haemophilus influenzae (strain PittGG).